A 136-amino-acid chain; its full sequence is Small ribosomal subunit protein uS8c (136 aa).

This sequence belongs to the universal ribosomal protein uS8 family. As to quaternary structure, part of the 30S ribosomal subunit.

It is found in the plastid. Its subcellular location is the chloroplast. Functionally, one of the primary rRNA binding proteins, it binds directly to 16S rRNA central domain where it helps coordinate assembly of the platform of the 30S subunit. This Agrostis stolonifera (Creeping bentgrass) protein is Small ribosomal subunit protein uS8c (rps8).